A 319-amino-acid chain; its full sequence is MAVYTDIHPNDLKVFLTRYAIGSLLSYQGIEEGIENSNFMLETTQGRFILTLYEKRISKDDLPFFCRLMQHLGQRGIPCPQPIIQNDGVMIGELAGRPAAIITFLEGEWIRQPDIDHCGEVGTGLAQLHLAGQDFTLSRKNTLSIMDWQVLWQRCQITEDALLKEFGQKIESELAFLQENWPFNLPTGIIHADLFNDNVFFVNHCLSGMIDFYFACNDFFSYDLAICLNAWCFEPDYSYNLIKARKLLENYQKIRPLIPLELDKIVLLARGASLRFLLTRLYDWFNTPPDSFVIKKNPWEYWHKLCFFSNVNSLSELGF.

It belongs to the pseudomonas-type ThrB family.

It carries out the reaction L-homoserine + ATP = O-phospho-L-homoserine + ADP + H(+). It functions in the pathway amino-acid biosynthesis; L-threonine biosynthesis; L-threonine from L-aspartate: step 4/5. This chain is Homoserine kinase, found in Bartonella tribocorum (strain CIP 105476 / IBS 506).